A 523-amino-acid chain; its full sequence is Asc-type amino acid transporter 1 (523 aa).

Residues M1–P28 are disordered. Residues R15–G25 are compositionally biased toward pro residues. 9 consecutive transmembrane segments (helical) span residues I40–I60, V72–C92, I113–T133, A268–F288, L310–I330, C362–G382, I388–L408, L424–S444, and V448–F468. The interval A499–Q523 is disordered.

The protein belongs to the amino acid-polyamine-organocation (APC) superfamily. As to quaternary structure, disulfide-linked heterodimer with the amino acid transport protein SLC3A2/4F2hc. Expressed in brain, heart, kidney, liver, lung, pancreas, placenta, and skeletal muscle.

It is found in the cell membrane. The enzyme catalyses L-alanine(in) + glycine(out) = L-alanine(out) + glycine(in). The catalysed reaction is L-serine(out) + L-alanine(in) = L-serine(in) + L-alanine(out). It catalyses the reaction L-threonine(out) + L-alanine(in) = L-threonine(in) + L-alanine(out). It carries out the reaction L-cysteine(out) + L-alanine(in) = L-cysteine(in) + L-alanine(out). The enzyme catalyses 2-aminoisobutanoate(out) + L-alanine(in) = 2-aminoisobutanoate(in) + L-alanine(out). The catalysed reaction is D-serine(out) + L-alanine(in) = D-serine(in) + L-alanine(out). It catalyses the reaction D-alanine(out) + L-alanine(in) = D-alanine(in) + L-alanine(out). It carries out the reaction L-valine(out) + L-alanine(in) = L-valine(in) + L-alanine(out). The enzyme catalyses L-methionine(out) + L-alanine(in) = L-methionine(in) + L-alanine(out). The catalysed reaction is beta-alanine(out) + L-alanine(in) = beta-alanine(in) + L-alanine(out). It catalyses the reaction D-cysteine(out) + L-alanine(in) = D-cysteine(in) + L-alanine(out). It carries out the reaction D-threonine(out) + L-alanine(in) = D-threonine(in) + L-alanine(out). The enzyme catalyses D-isoleucine(out) + D-serine(in) = D-isoleucine(in) + D-serine(out). The catalysed reaction is D-serine(in) = D-serine(out). Its function is as follows. Associates with SLC3A2/4F2hc to form a functional heterodimeric complex that translocates small neutral L- and D-amino acids across the plasma membrane. Preferentially mediates exchange transport, but can also operate via facilitated diffusion. Acts as a major transporter for glycine, L- and D-serine in the central nervous system. At the spinal cord and brainstem regulates glycine metabolism and glycinergic inhibitory neurotransmission by providing for glycine de novo synthesis from L-serine and glycine recycling from astrocytes to glycinergic motor neurons. At Schaffer collateral-CA1 synapses mediates D-serine and glycine release that modulates post-synaptic activation of NMDA receptors and excitatory glutamatergic transmission. May regulate D-serine release from mesenchymal progenitors located in developing subcutaneous adipose tissue, favoring white adipocyte over thermogenic beige adipocyte lineage commitment. The polypeptide is Asc-type amino acid transporter 1 (SLC7A10) (Homo sapiens (Human)).